The primary structure comprises 396 residues: Elongation factor Tu (396 aa).

In terms of domain architecture, tr-type G spans 10-206; it reads KPHVNVGTIG…ALDTYIPTPE (197 aa). The segment at 19–26 is G1; sequence GHVDHGKT. 19-26 is a binding site for GTP; sequence GHVDHGKT. Mg(2+) is bound at residue T26. The segment at 60-64 is G2; that stretch reads GITIN. Residues 81 to 84 form a G3 region; the sequence is DCPG. GTP is bound by residues 81–85 and 136–139; these read DCPGH and NKCD. The interval 136–139 is G4; that stretch reads NKCD. The tract at residues 174-176 is G5; it reads SAK.

Belongs to the TRAFAC class translation factor GTPase superfamily. Classic translation factor GTPase family. EF-Tu/EF-1A subfamily. Monomer.

The protein localises to the cytoplasm. The catalysed reaction is GTP + H2O = GDP + phosphate + H(+). In terms of biological role, GTP hydrolase that promotes the GTP-dependent binding of aminoacyl-tRNA to the A-site of ribosomes during protein biosynthesis. This is Elongation factor Tu from Thiomonas delicata (Thiomonas cuprina).